The sequence spans 291 residues: tRNA-cytidine(32) 2-sulfurtransferase (291 aa).

The PP-loop motif motif lies at 36–41 (SGGKDS). Positions 111, 114, and 202 each coordinate [4Fe-4S] cluster. The disordered stretch occupies residues 258-291 (RDPWLDAEDEEAEDCGEPPAGDGVVSLGGARGGR). A compositionally biased stretch (acidic residues) spans 262–273 (LDAEDEEAEDCG).

This sequence belongs to the TtcA family. In terms of assembly, homodimer. It depends on Mg(2+) as a cofactor. The cofactor is [4Fe-4S] cluster.

Its subcellular location is the cytoplasm. It carries out the reaction cytidine(32) in tRNA + S-sulfanyl-L-cysteinyl-[cysteine desulfurase] + AH2 + ATP = 2-thiocytidine(32) in tRNA + L-cysteinyl-[cysteine desulfurase] + A + AMP + diphosphate + H(+). The protein operates within tRNA modification. Functionally, catalyzes the ATP-dependent 2-thiolation of cytidine in position 32 of tRNA, to form 2-thiocytidine (s(2)C32). The sulfur atoms are provided by the cysteine/cysteine desulfurase (IscS) system. The chain is tRNA-cytidine(32) 2-sulfurtransferase from Anaeromyxobacter dehalogenans (strain 2CP-1 / ATCC BAA-258).